The sequence spans 125 residues: Snaclec B6 (125 aa).

3 disulfide bridges follow: C2/C13, C30/C119, and C96/C111. One can recognise a C-type lectin domain in the interval 9 to 120 (HEGHCYKVFK…CNISQYFVCQ (112 aa)). A glycan (N-linked (GlcNAc...) asparagine) is linked at N95. N112 is a glycosylation site (N-linked (GlcNAc...) asparagine).

It belongs to the snaclec family. As to quaternary structure, heterodimer; disulfide-linked. In terms of tissue distribution, expressed by the venom gland.

The protein localises to the secreted. In terms of biological role, interferes with one step of hemostasis (modulation of platelet aggregation, or coagulation cascade, for example). This is Snaclec B6 from Macrovipera lebetinus (Levantine viper).